The following is a 156-amino-acid chain: MNINSTLIGQAIAFAIFVMFCMKFVWPPLIGAINDRQRKIAEGLNAAEKAKADLATAERDVQQELDLAKTKAAALIEQANKSANQLVEDAKSQAQVEGERIRQQAQASIDQEINQARESLRAQVAELAVLGAEKILQDKVDVQKHASMLDQLAAKL.

A helical transmembrane segment spans residues 11 to 31 (AIAFAIFVMFCMKFVWPPLIG).

This sequence belongs to the ATPase B chain family. As to quaternary structure, F-type ATPases have 2 components, F(1) - the catalytic core - and F(0) - the membrane proton channel. F(1) has five subunits: alpha(3), beta(3), gamma(1), delta(1), epsilon(1). F(0) has three main subunits: a(1), b(2) and c(10-14). The alpha and beta chains form an alternating ring which encloses part of the gamma chain. F(1) is attached to F(0) by a central stalk formed by the gamma and epsilon chains, while a peripheral stalk is formed by the delta and b chains.

The protein localises to the cell inner membrane. F(1)F(0) ATP synthase produces ATP from ADP in the presence of a proton or sodium gradient. F-type ATPases consist of two structural domains, F(1) containing the extramembraneous catalytic core and F(0) containing the membrane proton channel, linked together by a central stalk and a peripheral stalk. During catalysis, ATP synthesis in the catalytic domain of F(1) is coupled via a rotary mechanism of the central stalk subunits to proton translocation. In terms of biological role, component of the F(0) channel, it forms part of the peripheral stalk, linking F(1) to F(0). The sequence is that of ATP synthase subunit b from Psychrobacter cryohalolentis (strain ATCC BAA-1226 / DSM 17306 / VKM B-2378 / K5).